The sequence spans 522 residues: Chromosomal replication initiator protein DnaA (522 aa).

Residues M1–M71 are domain I, interacts with DnaA modulators. The tract at residues M71–S185 is domain II. The interval R186 to S402 is domain III, AAA+ region. ATP is bound by residues G230, G232, K233, and T234. A domain IV, binds dsDNA region spans residues N403–G522.

The protein belongs to the DnaA family. Oligomerizes as a right-handed, spiral filament on DNA at oriC.

The protein localises to the cytoplasm. Its function is as follows. Plays an essential role in the initiation and regulation of chromosomal replication. ATP-DnaA binds to the origin of replication (oriC) to initiate formation of the DNA replication initiation complex once per cell cycle. Binds the DnaA box (a 9 base pair repeat at the origin) and separates the double-stranded (ds)DNA. Forms a right-handed helical filament on oriC DNA; dsDNA binds to the exterior of the filament while single-stranded (ss)DNA is stabiized in the filament's interior. The ATP-DnaA-oriC complex binds and stabilizes one strand of the AT-rich DNA unwinding element (DUE), permitting loading of DNA polymerase. After initiation quickly degrades to an ADP-DnaA complex that is not apt for DNA replication. Binds acidic phospholipids. The chain is Chromosomal replication initiator protein DnaA from Ralstonia nicotianae (strain ATCC BAA-1114 / GMI1000) (Ralstonia solanacearum).